The following is a 361-amino-acid chain: F-box protein pof7 (361 aa).

One can recognise an F-box domain in the interval N105 to Y157.

As to quaternary structure, interacts with skp1.

Its subcellular location is the cytoplasm. In Schizosaccharomyces pombe (strain 972 / ATCC 24843) (Fission yeast), this protein is F-box protein pof7 (pof7).